We begin with the raw amino-acid sequence, 227 residues long: PKHD-type hydroxylase Mfla_2317 (227 aa).

The 101-residue stretch at 78–178 (KVFPPLFNRY…RVSSFFWMQS (101 aa)) folds into the Fe2OG dioxygenase domain. Fe cation-binding residues include H96, D98, and H159. R169 is a binding site for 2-oxoglutarate.

Fe(2+) is required as a cofactor. Requires L-ascorbate as cofactor.

The sequence is that of PKHD-type hydroxylase Mfla_2317 from Methylobacillus flagellatus (strain ATCC 51484 / DSM 6875 / VKM B-1610 / KT).